Reading from the N-terminus, the 364-residue chain is Mitoferrin-2 (364 aa).

A compositionally biased stretch (gly residues) spans methionine 1–alanine 17. Disordered stretches follow at residues methionine 1–leucine 28 and glycine 40–glycine 60. Residues glycine 18 to alanine 27 show a composition bias toward low complexity. 3 Solcar repeats span residues alanine 70 to threonine 158, asparagine 168 to histidine 252, and tyrosine 259 to leucine 352. 6 helical membrane passes run valine 72–tyrosine 91, glycine 133–tyrosine 152, histidine 170–asparagine 189, serine 227–tyrosine 246, proline 261–threonine 280, and glycine 327–tyrosine 346.

This sequence belongs to the mitochondrial carrier (TC 2.A.29) family. As to expression, ubiquitous. Expressed in placenta, lung, kidney, pancreas, liver, brain, skeletal muscle and heart.

It is found in the mitochondrion inner membrane. The catalysed reaction is Fe(2+)(in) = Fe(2+)(out). Its function is as follows. Mitochondrial iron transporter that mediates iron uptake. Probably required for heme synthesis of hemoproteins and Fe-S cluster assembly in non-erythroid cells. In Homo sapiens (Human), this protein is Mitoferrin-2 (SLC25A28).